A 145-amino-acid polypeptide reads, in one-letter code: D-aminoacyl-tRNA deacylase (145 aa).

Residues 137–138 carry the Gly-cisPro motif, important for rejection of L-amino acids motif; sequence GP.

Belongs to the DTD family. Homodimer.

The protein resides in the cytoplasm. The enzyme catalyses glycyl-tRNA(Ala) + H2O = tRNA(Ala) + glycine + H(+). It carries out the reaction a D-aminoacyl-tRNA + H2O = a tRNA + a D-alpha-amino acid + H(+). In terms of biological role, an aminoacyl-tRNA editing enzyme that deacylates mischarged D-aminoacyl-tRNAs. Also deacylates mischarged glycyl-tRNA(Ala), protecting cells against glycine mischarging by AlaRS. Acts via tRNA-based rather than protein-based catalysis; rejects L-amino acids rather than detecting D-amino acids in the active site. By recycling D-aminoacyl-tRNA to D-amino acids and free tRNA molecules, this enzyme counteracts the toxicity associated with the formation of D-aminoacyl-tRNA entities in vivo and helps enforce protein L-homochirality. The sequence is that of D-aminoacyl-tRNA deacylase from Pelobacter propionicus (strain DSM 2379 / NBRC 103807 / OttBd1).